Here is a 149-residue protein sequence, read N- to C-terminus: Deoxyuridine 5'-triphosphate nucleotidohydrolase (149 aa).

Substrate-binding positions include 68 to 70 (RSG), Asn-81, 85 to 87 (LID), and Met-95.

The protein belongs to the dUTPase family. Mg(2+) is required as a cofactor.

The catalysed reaction is dUTP + H2O = dUMP + diphosphate + H(+). Its pathway is pyrimidine metabolism; dUMP biosynthesis; dUMP from dCTP (dUTP route): step 2/2. Functionally, this enzyme is involved in nucleotide metabolism: it produces dUMP, the immediate precursor of thymidine nucleotides and it decreases the intracellular concentration of dUTP so that uracil cannot be incorporated into DNA. In Herminiimonas arsenicoxydans, this protein is Deoxyuridine 5'-triphosphate nucleotidohydrolase.